Here is a 254-residue protein sequence, read N- to C-terminus: Putative epimerase LsrE (254 aa).

Residues 14-34 (VALLASYPLSVGILAGQWIAL) traverse the membrane as a helical segment. A divalent metal cation-binding residues include His-50, Asp-52, and His-81. The active-site Proton acceptor is the Asp-52. Substrate-binding positions include His-81, 166 to 169 (GYGS), 199 to 201 (DGS), and 221 to 222 (GS). A divalent metal cation is bound at residue Asp-199. The Proton donor role is filled by Asp-199.

Belongs to the ribulose-phosphate 3-epimerase family. A divalent metal cation serves as cofactor.

Its subcellular location is the cell membrane. The polypeptide is Putative epimerase LsrE (lsrE) (Salmonella choleraesuis (strain SC-B67)).